The following is a 134-amino-acid chain: ATP synthase epsilon chain, chloroplastic (134 aa).

Belongs to the ATPase epsilon chain family. In terms of assembly, F-type ATPases have 2 components, CF(1) - the catalytic core - and CF(0) - the membrane proton channel. CF(1) has five subunits: alpha(3), beta(3), gamma(1), delta(1), epsilon(1). CF(0) has three main subunits: a, b and c.

It is found in the plastid. It localises to the chloroplast thylakoid membrane. In terms of biological role, produces ATP from ADP in the presence of a proton gradient across the membrane. This chain is ATP synthase epsilon chain, chloroplastic, found in Nymphaea alba (White water-lily).